A 590-amino-acid polypeptide reads, in one-letter code: UvrABC system protein C (590 aa).

Positions 14 to 91 constitute a GIY-YIG domain; that stretch reads DQPGCYLMKD…IKKYDPKYNV (78 aa). The UVR domain maps to 196-231; it reads QQIKKELTEKMQEAAEQLEFERAKELRDQIAYIDST.

It belongs to the UvrC family. In terms of assembly, interacts with UvrB in an incision complex.

It localises to the cytoplasm. The UvrABC repair system catalyzes the recognition and processing of DNA lesions. UvrC both incises the 5' and 3' sides of the lesion. The N-terminal half is responsible for the 3' incision and the C-terminal half is responsible for the 5' incision. This Bacillus pumilus (strain SAFR-032) protein is UvrABC system protein C.